The following is a 1146-amino-acid chain: Probable transport protein MmpL12 (1146 aa).

The next 11 membrane-spanning stretches (helical) occupy residues 25-45 (LIVI…LPTL), 206-226 (VSVL…LVPL), 254-274 (AIVF…VFLI), 298-318 (IGKV…AMVF), 330-350 (AIAV…PAIL), 382-402 (TIHL…TLLI), 826-846 (FIVI…LRAL), 850-870 (IYLI…GTLV), 883-903 (LPGL…MLLI), 928-948 (VITS…GASI), and 949-969 (NTMA…TFLV).

It belongs to the resistance-nodulation-cell division (RND) (TC 2.A.6) family. MmpL subfamily.

Its subcellular location is the cell membrane. In Mycobacterium tuberculosis (strain CDC 1551 / Oshkosh), this protein is Probable transport protein MmpL12 (mmpL12).